Here is a 1247-residue protein sequence, read N- to C-terminus: Clustered mitochondria protein homolog (1247 aa).

Positions 1–43 (MTLGSETKTDVEVPIINGKHEIPQEENDSGHSSINTPDSSEPD) are disordered. Polar residues predominate over residues 30–39 (GHSSINTPDS). The Clu domain occupies 329 to 579 (SDSLRAIELT…RSMPPDVHYL (251 aa)). Residues 1222-1247 (GKQQNGTTEESKTTDVAAQLDNETLD) form a disordered region.

It belongs to the CLU family.

The protein resides in the cytoplasm. In terms of biological role, mRNA-binding protein involved in proper cytoplasmic distribution of mitochondria. The chain is Clustered mitochondria protein homolog from Caenorhabditis elegans.